The sequence spans 439 residues: 26S rRNA (cytosine-C(5))-methyltransferase nsun-5 (439 aa).

The S-adenosyl-L-methionine site is built by aspartate 266, aspartate 293, and aspartate 313. The active-site Nucleophile is cysteine 366.

It belongs to the class I-like SAM-binding methyltransferase superfamily. RsmB/NOP family.

The enzyme catalyses a cytidine in 26S rRNA + S-adenosyl-L-methionine = a 5-methylcytidine in 26S rRNA + S-adenosyl-L-homocysteine + H(+). Functionally, S-adenosyl-L-methionine-dependent methyltransferase which methylates the carbon-5 position of cytosine 2381 to 5-methylcytosine (m5C2381) in 26S rRNA. Plays a role in the production of mature 5S, 5.8S, 18S and 26S rRNAs and promotes the processing of the internally transcribed spacer 2 (ITS2), which separates the 5.8S and 26S rRNAs on large pre-rRNA precursors. May play a role in the translation of leucine and proline codons. May play a role in maintaining ribosomal frameshifting in response to osmotic stress. Not required for global translation. The sequence is that of 26S rRNA (cytosine-C(5))-methyltransferase nsun-5 from Caenorhabditis elegans.